We begin with the raw amino-acid sequence, 336 residues long: 3-isopropylmalate dehydrogenase (336 aa).

Residues arginine 87, arginine 97, arginine 121, and aspartate 211 each coordinate substrate. Aspartate 211, aspartate 235, and aspartate 239 together coordinate Mg(2+). 271 to 283 (GSAPDIAGQGIAD) serves as a coordination point for NAD(+).

This sequence belongs to the isocitrate and isopropylmalate dehydrogenases family. LeuB type 2 subfamily. In terms of assembly, homodimer. It depends on Mg(2+) as a cofactor. Mn(2+) is required as a cofactor.

It localises to the cytoplasm. It carries out the reaction (2R,3S)-3-isopropylmalate + NAD(+) = 4-methyl-2-oxopentanoate + CO2 + NADH. It functions in the pathway amino-acid biosynthesis; L-leucine biosynthesis; L-leucine from 3-methyl-2-oxobutanoate: step 3/4. In terms of biological role, catalyzes the oxidation of 3-carboxy-2-hydroxy-4-methylpentanoate (3-isopropylmalate) to 3-carboxy-4-methyl-2-oxopentanoate. The product decarboxylates to 4-methyl-2 oxopentanoate. The chain is 3-isopropylmalate dehydrogenase from Mycolicibacterium gilvum (strain PYR-GCK) (Mycobacterium gilvum (strain PYR-GCK)).